Consider the following 417-residue polypeptide: 3-oxoacyl-[acyl-carrier-protein] synthase 2 (417 aa).

One can recognise a Ketosynthase family 3 (KS3) domain in the interval 10 to 416 (FPYVVVTGIA…GHNVAIAFGR (407 aa)). Active-site for beta-ketoacyl synthase activity residues include Cys-170, His-311, and His-346.

This sequence belongs to the thiolase-like superfamily. Beta-ketoacyl-ACP synthases family.

It localises to the cytoplasm. It carries out the reaction an ultra-long-chain di-unsaturated fatty acyl-[ACP] + malonyl-[ACP] + H(+) = a 3-oxo-ultra-long-chain di-unsaturated fatty acyl-[ACP] + holo-[ACP] + CO2. It functions in the pathway lipid metabolism; mycolic acid biosynthesis. Its function is as follows. Part of the mycobacterial fatty acid elongation system FAS-II, which is involved in mycolic acid biosynthesis. Catalyzes the elongation of long chain acyl-ACP substrates by the addition of two carbons from malonyl-ACP to an acyl acceptor. Involved in extension of the mycolate chains to full lengths and produces longer chain multiunsaturated hydrocarbons averaging 54 carbons in length. This is 3-oxoacyl-[acyl-carrier-protein] synthase 2 (kasB) from Mycobacterium bovis (strain ATCC BAA-935 / AF2122/97).